An 83-amino-acid polypeptide reads, in one-letter code: Putative regulatory protein FMG_0656 (83 aa).

It belongs to the RemA family.

The sequence is that of Putative regulatory protein FMG_0656 from Finegoldia magna (strain ATCC 29328 / DSM 20472 / WAL 2508) (Peptostreptococcus magnus).